The following is a 277-amino-acid chain: Venom serine protease (277 aa).

Positions 1–19 (MNCGKIILLFITIIGVAKS) are cleaved as a signal peptide. The Peptidase S1 domain occupies 34-269 (IVNGVETEIN…FMEFIHNATI (236 aa)). Residues Cys60 and Cys76 are joined by a disulfide bond. The active-site Charge relay system is the His75. N-linked (GlcNAc...) asparagine glycans are attached at residues Asn84 and Asn104. Catalysis depends on Asp126, which acts as the Charge relay system. N-linked (GlcNAc...) asparagine glycosylation is found at Asn155 and Asn158. 2 disulfide bridges follow: Cys192-Cys207 and Cys216-Cys246. A glycan (N-linked (GlcNAc...) asparagine) is linked at Asn218. The active-site Charge relay system is the Ser220. N-linked (GlcNAc...) asparagine glycosylation occurs at Asn266.

This sequence belongs to the peptidase S1 family. Expressed by the venom duct.

It is found in the secreted. This is Venom serine protease from Polistes dominula (European paper wasp).